Here is a 243-residue protein sequence, read N- to C-terminus: Ribonuclease PH (243 aa).

Phosphate contacts are provided by residues arginine 91 and 129–131; that span reads GTR.

Belongs to the RNase PH family. Homohexameric ring arranged as a trimer of dimers.

It carries out the reaction tRNA(n+1) + phosphate = tRNA(n) + a ribonucleoside 5'-diphosphate. Phosphorolytic 3'-5' exoribonuclease that plays an important role in tRNA 3'-end maturation. Removes nucleotide residues following the 3'-CCA terminus of tRNAs; can also add nucleotides to the ends of RNA molecules by using nucleoside diphosphates as substrates, but this may not be physiologically important. Probably plays a role in initiation of 16S rRNA degradation (leading to ribosome degradation) during starvation. The sequence is that of Ribonuclease PH from Burkholderia thailandensis (strain ATCC 700388 / DSM 13276 / CCUG 48851 / CIP 106301 / E264).